We begin with the raw amino-acid sequence, 185 residues long: Large ribosomal subunit protein uL5 (185 aa).

The protein belongs to the universal ribosomal protein uL5 family. As to quaternary structure, part of the 50S ribosomal subunit; part of the 5S rRNA/L5/L18/L25 subcomplex. Contacts the 5S rRNA and the P site tRNA. Forms a bridge to the 30S subunit in the 70S ribosome.

In terms of biological role, this is one of the proteins that bind and probably mediate the attachment of the 5S RNA into the large ribosomal subunit, where it forms part of the central protuberance. In the 70S ribosome it contacts protein S13 of the 30S subunit (bridge B1b), connecting the 2 subunits; this bridge is implicated in subunit movement. Contacts the P site tRNA; the 5S rRNA and some of its associated proteins might help stabilize positioning of ribosome-bound tRNAs. This Bartonella henselae (strain ATCC 49882 / DSM 28221 / CCUG 30454 / Houston 1) (Rochalimaea henselae) protein is Large ribosomal subunit protein uL5.